Here is a 207-residue protein sequence, read N- to C-terminus: Hydrogenase expression/formation protein HoxM (207 aa).

Positions 19, 65, and 96 each coordinate Ni(2+).

It belongs to the peptidase A31 family.

Functionally, not known. Could be involved in the processing of hydrogenase. In Azotobacter vinelandii, this protein is Hydrogenase expression/formation protein HoxM (hoxM).